Reading from the N-terminus, the 506-residue chain is CTL-like protein DDB_G0269978 (506 aa).

N-linked (GlcNAc...) asparagine glycans are attached at residues Asn-15 and Asn-41. Helical transmembrane passes span 91–111 (LLYS…TVIA), 126–146 (LQGL…FLIW), 161–181 (SFFS…GNGW), 182–202 (YSWA…YFAF), 226–246 (TLLV…IWLF), 256–276 (SYWT…LYWT), 279–299 (VITY…YFFA), 323–343 (FGSI…QFIC), 345–367 (GFAR…ALIF), 371–393 (LYTF…CNSS), 416–436 (ITML…VTMI), and 447–467 (WLYV…DIIF).

This sequence belongs to the CTL (choline transporter-like) family.

It is found in the membrane. In Dictyostelium discoideum (Social amoeba), this protein is CTL-like protein DDB_G0269978.